The following is a 384-amino-acid chain: Urea transporter 1 (384 aa).

E39 is modified (phosphoserine). 5 consecutive transmembrane segments (helical) span residues I61–L81, P85–L105, A111–F131, F138–A158, and L168–H188. A glycan (N-linked (GlcNAc...) asparagine) is linked at N206. Transmembrane regions (helical) follow at residues L250–A270, I276–F296, L305–M325, and V327–L347.

It belongs to the urea transporter family. Homotrimer; each subunit contains a pore through which urea permeates. Identified in a complex with STOM. N-glycosylated in red blood cells, as well as in most non-erythroid tissues, except in the gastrocnemius muscle and in the gastrointestinal tract, including liver, colon and stomach. Expressed in brain, kidney, heart, liver, lung, skeletal muscle, spleen, testis, ureter and urinary bladder (at protein level). Along the gastrointestinal tract, detected in colon, jejunum and stomach (at protein level). In the kidney, expressed in some microvessels of the inner and outer medulla, but not all (at protein level). Not detected in the cortex (at protein level). Detected in the urothelium all along the urinary tract, including the papilla surface, the ureter, the bladder and the urethra (at protein level). In the brain, expressed at the border of the corpus callosum and striatum in astrocytic cellular processes surrounding blood microvessels (at protein level). Detected in erythrocytes (at protein level).

The protein resides in the cell membrane. It is found in the basolateral cell membrane. It catalyses the reaction urea(in) = urea(out). Functionally, mediates the transport of urea driven by a concentration gradient across the cell membranes of erythrocytes and the renal inner medullary collecting duct which is critical to the urinary concentrating mechanism. Facilitates water transport in erythrocytes. The protein is Urea transporter 1 (Slc14a1) of Mus musculus (Mouse).